We begin with the raw amino-acid sequence, 1017 residues long: Probable DNA ligase (1017 aa).

Positions 1-363 (MPWDVKFSHG…PACATPLHAP (363 aa)) are unknown. The disordered stretch occupies residues 326–352 (GIRSSPPQVRAGDATPSSRSSGDAGVA). The tract at residues 364 to 1017 (DSFARFVAAA…GARPPPAASD (654 aa)) is DNA ligase. Residue Glu-667 participates in ATP binding. Residue Lys-669 is the N6-AMP-lysine intermediate of the active site. Residues Arg-674, Arg-689, Glu-717, Arg-860, and Lys-866 each contribute to the ATP site.

This sequence in the C-terminal section; belongs to the ATP-dependent DNA ligase family. Requires Mg(2+) as cofactor.

The enzyme catalyses ATP + (deoxyribonucleotide)n-3'-hydroxyl + 5'-phospho-(deoxyribonucleotide)m = (deoxyribonucleotide)n+m + AMP + diphosphate.. DNA ligase that seals nicks in double-stranded DNA during DNA replication, DNA recombination and DNA repair. The chain is Probable DNA ligase (lig) from Opitutus terrae (strain DSM 11246 / JCM 15787 / PB90-1).